The chain runs to 438 residues: Exodeoxyribonuclease 7 large subunit (438 aa).

Residues 405–438 are disordered; sequence GATSTGPTDDIPSSAARLPSSPAPDARPASGAES.

This sequence belongs to the XseA family. As to quaternary structure, heterooligomer composed of large and small subunits.

The protein localises to the cytoplasm. The enzyme catalyses Exonucleolytic cleavage in either 5'- to 3'- or 3'- to 5'-direction to yield nucleoside 5'-phosphates.. Functionally, bidirectionally degrades single-stranded DNA into large acid-insoluble oligonucleotides, which are then degraded further into small acid-soluble oligonucleotides. This Clavibacter michiganensis subsp. michiganensis (strain NCPPB 382) protein is Exodeoxyribonuclease 7 large subunit.